A 297-amino-acid polypeptide reads, in one-letter code: Probable porphobilinogen deaminase (297 aa).

The residue at position 233 (Cys-233) is an S-(dipyrrolylmethanemethyl)cysteine.

The protein belongs to the HMBS family. It depends on dipyrromethane as a cofactor.

It catalyses the reaction 4 porphobilinogen + H2O = hydroxymethylbilane + 4 NH4(+). It participates in porphyrin-containing compound metabolism; protoporphyrin-IX biosynthesis; coproporphyrinogen-III from 5-aminolevulinate: step 2/4. In terms of biological role, tetrapolymerization of the monopyrrole PBG into the hydroxymethylbilane pre-uroporphyrinogen in several discrete steps. The sequence is that of Probable porphobilinogen deaminase from Thermoplasma volcanium (strain ATCC 51530 / DSM 4299 / JCM 9571 / NBRC 15438 / GSS1).